Consider the following 268-residue polypeptide: 4-hydroxy-tetrahydrodipicolinate reductase (268 aa).

NAD(+) contacts are provided by residues G7–M12 and E33. R34 is a binding site for NADP(+). NAD(+)-binding positions include G97–T99 and S121–M124. The active-site Proton donor/acceptor is H155. H156 is a binding site for (S)-2,3,4,5-tetrahydrodipicolinate. Catalysis depends on K159, which acts as the Proton donor. A (S)-2,3,4,5-tetrahydrodipicolinate-binding site is contributed by G165–T166.

It belongs to the DapB family.

The protein localises to the cytoplasm. The enzyme catalyses (S)-2,3,4,5-tetrahydrodipicolinate + NAD(+) + H2O = (2S,4S)-4-hydroxy-2,3,4,5-tetrahydrodipicolinate + NADH + H(+). It carries out the reaction (S)-2,3,4,5-tetrahydrodipicolinate + NADP(+) + H2O = (2S,4S)-4-hydroxy-2,3,4,5-tetrahydrodipicolinate + NADPH + H(+). It participates in amino-acid biosynthesis; L-lysine biosynthesis via DAP pathway; (S)-tetrahydrodipicolinate from L-aspartate: step 4/4. Functionally, catalyzes the conversion of 4-hydroxy-tetrahydrodipicolinate (HTPA) to tetrahydrodipicolinate. This chain is 4-hydroxy-tetrahydrodipicolinate reductase, found in Brucella abortus (strain 2308).